The following is a 341-amino-acid chain: Tetraacyldisaccharide 4'-kinase (341 aa).

54–61 is an ATP binding site; the sequence is TVGGAGKT.

Belongs to the LpxK family.

It catalyses the reaction a lipid A disaccharide + ATP = a lipid IVA + ADP + H(+). The protein operates within glycolipid biosynthesis; lipid IV(A) biosynthesis; lipid IV(A) from (3R)-3-hydroxytetradecanoyl-[acyl-carrier-protein] and UDP-N-acetyl-alpha-D-glucosamine: step 6/6. Its function is as follows. Transfers the gamma-phosphate of ATP to the 4'-position of a tetraacyldisaccharide 1-phosphate intermediate (termed DS-1-P) to form tetraacyldisaccharide 1,4'-bis-phosphate (lipid IVA). This Brucella melitensis biotype 1 (strain ATCC 23456 / CCUG 17765 / NCTC 10094 / 16M) protein is Tetraacyldisaccharide 4'-kinase.